The sequence spans 144 residues: Putative acetyltransferase SAOUHSC_00995 (144 aa).

The region spanning 1-141 (MFSKVNNQKM…EHIEMTKKLT (141 aa)) is the N-acetyltransferase domain. CoA is bound by residues 71 to 73 (VAV), G79, and 112 to 114 (PFY).

Belongs to the UPF0039 (ElaA) family.

Its function is as follows. Could catalyze the transfer of an acetyl group from acetyl coenzyme A (AcCoA) to an acceptor substrate and release both CoA and the acetylated product. The polypeptide is Putative acetyltransferase SAOUHSC_00995 (Staphylococcus aureus (strain NCTC 8325 / PS 47)).